The primary structure comprises 396 residues: 1-deoxy-D-xylulose 5-phosphate reductoisomerase (396 aa).

NADPH-binding residues include Thr-13, Gly-14, Ser-15, Ile-16, and Asn-127. Residue Lys-128 participates in 1-deoxy-D-xylulose 5-phosphate binding. NADPH is bound at residue Glu-129. Residue Asp-153 participates in Mn(2+) binding. Ser-154, Glu-155, Ser-184, and His-207 together coordinate 1-deoxy-D-xylulose 5-phosphate. Glu-155 provides a ligand contact to Mn(2+). Gly-213 lines the NADPH pocket. Positions 220, 225, 226, and 229 each coordinate 1-deoxy-D-xylulose 5-phosphate. Glu-229 serves as a coordination point for Mn(2+).

It belongs to the DXR family. Mg(2+) is required as a cofactor. The cofactor is Mn(2+).

The enzyme catalyses 2-C-methyl-D-erythritol 4-phosphate + NADP(+) = 1-deoxy-D-xylulose 5-phosphate + NADPH + H(+). It participates in isoprenoid biosynthesis; isopentenyl diphosphate biosynthesis via DXP pathway; isopentenyl diphosphate from 1-deoxy-D-xylulose 5-phosphate: step 1/6. With respect to regulation, inhibited by fosmidomycin and 3-(N-acetyl-N-hydroxyamino)-propylphosphonic acid (FR-900098). Catalyzes the NADPH-dependent rearrangement and reduction of 1-deoxy-D-xylulose-5-phosphate (DXP) to 2-C-methyl-D-erythritol 4-phosphate (MEP). The protein is 1-deoxy-D-xylulose 5-phosphate reductoisomerase of Pseudomonas aeruginosa (strain ATCC 15692 / DSM 22644 / CIP 104116 / JCM 14847 / LMG 12228 / 1C / PRS 101 / PAO1).